A 487-amino-acid polypeptide reads, in one-letter code: Probable glutamate receptor (487 aa).

Positions 1–23 (MDKGLHFIFCVVTAVLLLRESSQ) are cleaved as a signal peptide. At 24–169 (TGAMRNDDAM…FFHFLAPFSK (146 aa)) the chain is on the extracellular side. A glycan (N-linked (GlcNAc...) asparagine) is linked at asparagine 104. The helical transmembrane segment at 170–190 (ETWTGLLFAYVLTCVCLFLVA) threads the bilayer. The Cytoplasmic portion of the chain corresponds to 191–235 (RLSPCEWNEPKNEENHFTFLNSLWFGAGALTLQGVTPRPKAFSVR). Residues 236–256 (VIAAIWWLFTIALLAAYIANF) form a helical membrane-spanning segment. The Extracellular segment spans residues 257–419 (TALLSSGSEQ…EGWSPLQPQA (163 aa)). The helical transmembrane segment at 420-440 (LGGLFLTLAIGLALGVIAAMV) threads the bilayer. Over 441–487 (ELSNKSRHAAGHIKKSCCSIFTEEMCTRLRIKENTRQTQETSGRANA) the chain is Cytoplasmic.

The protein belongs to the glutamate-gated ion channel (TC 1.A.10.1) family.

It localises to the cell membrane. It is found in the postsynaptic cell membrane. Its function is as follows. Receptor for glutamate. L-glutamate acts as an excitatory neurotransmitter at many synapses in the central nervous system. The postsynaptic actions of Glu are mediated by a variety of receptors that are named according to their selective agonists. This chain is Probable glutamate receptor (KBP), found in Gallus gallus (Chicken).